We begin with the raw amino-acid sequence, 491 residues long: Probable CtpA-like serine protease (491 aa).

Residues 1 to 22 (MNDHQKNHATSQDDNTKSTPSK) are disordered. Residues 8 to 22 (HATSQDDNTKSTPSK) show a composition bias toward polar residues. Residues 31–51 (LWHFILVILGIILLTSIITVV) traverse the membrane as a helical segment. The region spanning 119–201 (TKQFNEGVSG…TYVTLTIKRG (83 aa)) is the PDZ domain. Residues serine 324, aspartate 335, and lysine 349 each act as charge relay system in the active site.

Belongs to the peptidase S41A family.

Its subcellular location is the cell membrane. The sequence is that of Probable CtpA-like serine protease from Staphylococcus epidermidis (strain ATCC 12228 / FDA PCI 1200).